We begin with the raw amino-acid sequence, 383 residues long: Glutamate 5-kinase (383 aa).

Lysine 17 contributes to the ATP binding site. Residues serine 64, aspartate 151, and asparagine 165 each contribute to the substrate site. An ATP-binding site is contributed by serine 185–aspartate 186. The 77-residue stretch at serine 291–asparagine 367 folds into the PUA domain.

Belongs to the glutamate 5-kinase family.

It is found in the cytoplasm. It catalyses the reaction L-glutamate + ATP = L-glutamyl 5-phosphate + ADP. It participates in amino-acid biosynthesis; L-proline biosynthesis; L-glutamate 5-semialdehyde from L-glutamate: step 1/2. Functionally, catalyzes the transfer of a phosphate group to glutamate to form L-glutamate 5-phosphate. In Methanosarcina barkeri (strain Fusaro / DSM 804), this protein is Glutamate 5-kinase.